The sequence spans 69 residues: Light-harvesting protein B-1015 alpha chain (69 aa).

Residues 2–20 are Cytoplasmic-facing; that stretch reads ATEYRTASWKLWLILDPRR. The helical transmembrane segment at 21-41 threads the bilayer; the sequence is VLTALFVYLTVIALLIHFGLL. Residue His-37 participates in a bacteriochlorophyll binding. At 42 to 59 the chain is on the periplasmic side; sequence STDRLNWWEFQRGLPKAA. Residues 60 to 69 constitute a propeptide that is removed on maturation; the sequence is SLVVVPPAVG.

This sequence belongs to the antenna complex alpha subunit family. In terms of assembly, the core complex is formed by different alpha and beta chains, binding bacteriochlorophyll molecules, and arranged most probably in tetrameric structures disposed around the reaction center. The non-pigmented gamma chains may constitute additional components.

The protein localises to the cell inner membrane. In terms of biological role, antenna complexes are light-harvesting systems, which transfer the excitation energy to the reaction centers. This Blastochloris viridis (Rhodopseudomonas viridis) protein is Light-harvesting protein B-1015 alpha chain (pufA).